We begin with the raw amino-acid sequence, 442 residues long: Cyclic 2,3-diphosphoglycerate synthetase (442 aa).

The protein belongs to the cyclic 2,3-diphosphoglycerate synthetase family.

The protein resides in the cytoplasm. It carries out the reaction (2R)-2,3-bisphosphoglycerate + ATP + H(+) = cyclic (2R)-2,3-bisphosphoglycerate + ADP + phosphate. Catalyzes the formation of cyclic 2,3-diphosphoglycerate (cDPG) by formation of an intramolecular phosphoanhydride bond at the expense of ATP. The chain is Cyclic 2,3-diphosphoglycerate synthetase from Rubrobacter xylanophilus (strain DSM 9941 / JCM 11954 / NBRC 16129 / PRD-1).